The sequence spans 810 residues: MNSEIKSLPLLPLRGILVFPYMVIHLDVGREKSIQAIEEAMVQDRMIFLATQREAQTDEPTVDDIYNIGTVAEVKQLLKLPGGTIRVLVEGIARAKIEKYEHQDPYFRVEVQQYSEEFEKGAEVEALMRSLVYQFEQYVKLSKRIPPETVVSVVNLEEPGRLADIIASHLALKIEDKQNVLESVEIVDRLEKLCGIVAKELEIVELERKINIRVRKQMEKTQKEYYLREQMKAIQKELGEKDERVAECEEFREKISKAKFPKEAEEKALKEVERLEKMPPMAAEAAVVRNYLDWMLSLPWSKSTKDRIDINAAEEVLEADHYGLKDPKERITEYLAIRKLAKKMKGPILCLVGPPGVGKTSLGRSVARALDRKFVRISLGGVRDEAEIRGHRRTYVGAMPGRVIQGMRTAGSKNPVFLLDEIDKMASDFRGDPSSALLEVLDPEQNSTFSDHYIETPFDLSNVMFITTANNMYSIPRPLLDRMEVIQISGYTEEEKLQIAKRHLMPKQIKDHGLTEEMIQISENTILKVIREYTRESGVRNLERKIASICRKTAKKIVAGQAEKVKVTTQNLEQFLGIPRYRYGVAEQNDEVGTVTGMAWTEVGGDTLVIEVTTYKGTGRMTLTGKLGDVMKESAQAGYSFIRSRAQELGIDQEMFEKWDLHIHIPEGAIPKDGPSAGITMATAMASVLTGRKVRHDIAMTGEITLRGRVLPVGGIKEKVMAAHRAGIKLIILPNDNKKDLEDIPVNIKKQLEFKLVDHIDQVLAIALLEKEVVDTTTVLEPEAAVMDNPHFSAVDSQEVQQQGGTQLPS.

Residues 8–201 form the Lon N-terminal domain; the sequence is LPLLPLRGIL…KLCGIVAKEL (194 aa). Residue 353–360 participates in ATP binding; the sequence is GPPGVGKT. The Lon proteolytic domain maps to 589 to 770; the sequence is NDEVGTVTGM…DQVLAIALLE (182 aa). Residues serine 676 and lysine 719 contribute to the active site.

The protein belongs to the peptidase S16 family. Homohexamer. Organized in a ring with a central cavity.

It localises to the cytoplasm. The catalysed reaction is Hydrolysis of proteins in presence of ATP.. ATP-dependent serine protease that mediates the selective degradation of mutant and abnormal proteins as well as certain short-lived regulatory proteins. Required for cellular homeostasis and for survival from DNA damage and developmental changes induced by stress. Degrades polypeptides processively to yield small peptide fragments that are 5 to 10 amino acids long. Binds to DNA in a double-stranded, site-specific manner. The polypeptide is Lon protease (Desulforamulus reducens (strain ATCC BAA-1160 / DSM 100696 / MI-1) (Desulfotomaculum reducens)).